Reading from the N-terminus, the 156-residue chain is Endoribonuclease YbeY (156 aa).

Residues His-122, His-126, and His-132 each contribute to the Zn(2+) site.

This sequence belongs to the endoribonuclease YbeY family. Zn(2+) is required as a cofactor.

It localises to the cytoplasm. Functionally, single strand-specific metallo-endoribonuclease involved in late-stage 70S ribosome quality control and in maturation of the 3' terminus of the 16S rRNA. The protein is Endoribonuclease YbeY of Geobacillus sp. (strain WCH70).